Reading from the N-terminus, the 128-residue chain is Large ribosomal subunit protein bL20 (128 aa).

It belongs to the bacterial ribosomal protein bL20 family.

Binds directly to 23S ribosomal RNA and is necessary for the in vitro assembly process of the 50S ribosomal subunit. It is not involved in the protein synthesizing functions of that subunit. In Kocuria rhizophila (strain ATCC 9341 / DSM 348 / NBRC 103217 / DC2201), this protein is Large ribosomal subunit protein bL20.